A 312-amino-acid chain; its full sequence is Malate dehydrogenase (312 aa).

NAD(+) is bound by residues 7–13 and Asp-34; that span reads GAAGGIG. Positions 81 and 87 each coordinate substrate. NAD(+)-binding positions include Asn-94 and 117–119; that span reads ITN. Residues Asn-119 and Arg-153 each contribute to the substrate site. His-177 functions as the Proton acceptor in the catalytic mechanism. Met-227 is an NAD(+) binding site.

Belongs to the LDH/MDH superfamily. MDH type 1 family. As to quaternary structure, homodimer.

It catalyses the reaction (S)-malate + NAD(+) = oxaloacetate + NADH + H(+). In terms of biological role, catalyzes the reversible oxidation of malate to oxaloacetate. The chain is Malate dehydrogenase from Photorhabdus laumondii subsp. laumondii (strain DSM 15139 / CIP 105565 / TT01) (Photorhabdus luminescens subsp. laumondii).